The chain runs to 768 residues: Cullin-3 (768 aa).

Positions 677-698 (VAAKQGESDPERKETRQKVDDD) are disordered. Over residues 682–698 (GESDPERKETRQKVDDD) the composition is skewed to basic and acidic residues. Residues 698 to 760 (DRKHEIEAAI…REYLARTPED (63 aa)) form the Cullin neddylation domain. Lys712 is covalently cross-linked (Glycyl lysine isopeptide (Lys-Gly) (interchain with G-Cter in NEDD8)).

This sequence belongs to the cullin family. As to quaternary structure, component of multiple BCR (BTB-CUL3-RBX1) E3 ubiquitin-protein ligase complexes formed of cul3, rbx1 and a variable BTB domain-containing protein acting as both, adapter to cullin and substrate recognition subunit. Interacts with btbd6. In terms of processing, neddylated. Attachment of NEDD8 is required for the E3 ubiquitin-protein ligase activity of the SCF-like complex.

It localises to the nucleus. It participates in protein modification; protein ubiquitination. In terms of biological role, probable core component of cullin-based SCF-like E3 ubiquitin-protein ligase complexes which mediate the ubiquitination and subsequent proteasomal degradation of target proteins. The E3 ubiquitin-protein ligase activity of the complex is dependent on the neddylation of the cullin subunit. Involved in ER-Golgi transport by regulating the size of COPII coats, thereby playing a key role in collagen export, which is required for embryonic stem (ES) cells division. May play a role in the regulation of mittotic entry via ubiquitination of aurka. This Xenopus tropicalis (Western clawed frog) protein is Cullin-3 (cul3).